Reading from the N-terminus, the 40-residue chain is Hemoglobin subunit alpha-2 (40 aa).

Positions 1 to 40 (VGPHLDDYGGEALHRNFEVYPQTKTYFPHFDASAGSNQLK) constitute a Globin domain.

It belongs to the globin family. Heterotetramer of two alpha chains and two beta chains. In terms of tissue distribution, red blood cells.

Involved in oxygen transport from the lung to the various peripheral tissues. This chain is Hemoglobin subunit alpha-2, found in Saara hardwickii (Indian spiny-tailed lizard).